An 801-amino-acid chain; its full sequence is Disks large homolog 4 (801 aa).

The L27 domain maps to Lys4 to Gln60. PDZ domains are found at residues Glu153–Lys240 and Glu248–Leu335. Residues His339–Arg373 are disordered. The 82-residue stretch at Arg393–Pro474 folds into the PDZ 3 domain. An SH3 domain is found at Lys507–Glu577. The Guanylate kinase-like domain occupies Ala610–Glu786.

It belongs to the MAGUK family. In terms of processing, ubiquitinated by MDM2 in response to NMDA receptor activation, leading to proteasome-mediated degradation of DLG4 which is required for AMPA receptor endocytosis. Post-translationally, palmitoylated. Palmitoylation is required for targeting to postsynaptic density, plasma membrane and synapses.

The protein resides in the cell membrane. The protein localises to the postsynaptic density. Its subcellular location is the synapse. Functionally, postsynaptic scaffolding protein that plays a critical role in synaptogenesis and synaptic plasticity by providing a platform for the postsynaptic clustering of crucial synaptic proteins. This chain is Disks large homolog 4 (dlg4), found in Danio rerio (Zebrafish).